The sequence spans 396 residues: Elongation factor Tu (396 aa).

Positions 10 to 206 (KPHCNIGTIG…AVDAYIPQPE (197 aa)) constitute a tr-type G domain. Residues 19-26 (GHVDHGKT) are G1. 19–26 (GHVDHGKT) contacts GTP. Residue T26 coordinates Mg(2+). Positions 60-64 (GITIS) are G2. The segment at 81–84 (DCPG) is G3. GTP contacts are provided by residues 81 to 85 (DCPGH) and 136 to 139 (NKVD). Residues 136-139 (NKVD) are G4. The tract at residues 174-176 (SAL) is G5.

The protein belongs to the TRAFAC class translation factor GTPase superfamily. Classic translation factor GTPase family. EF-Tu/EF-1A subfamily. In terms of assembly, monomer.

It localises to the cytoplasm. It catalyses the reaction GTP + H2O = GDP + phosphate + H(+). In terms of biological role, GTP hydrolase that promotes the GTP-dependent binding of aminoacyl-tRNA to the A-site of ribosomes during protein biosynthesis. This Gluconacetobacter diazotrophicus (strain ATCC 49037 / DSM 5601 / CCUG 37298 / CIP 103539 / LMG 7603 / PAl5) protein is Elongation factor Tu.